Consider the following 244-residue polypeptide: Haloacid dehalogenase-like hydrolase domain-containing protein 3 (244 aa).

It belongs to the HAD-like hydrolase superfamily.

The protein is Haloacid dehalogenase-like hydrolase domain-containing protein 3 (hdhd3) of Xenopus laevis (African clawed frog).